The primary structure comprises 292 residues: 1D-myo-inositol 2-acetamido-2-deoxy-alpha-D-glucopyranoside deacetylase (292 aa).

Zn(2+)-binding residues include histidine 12, aspartate 15, and histidine 147.

This sequence belongs to the MshB deacetylase family. Zn(2+) is required as a cofactor.

The enzyme catalyses 1D-myo-inositol 2-acetamido-2-deoxy-alpha-D-glucopyranoside + H2O = 1D-myo-inositol 2-amino-2-deoxy-alpha-D-glucopyranoside + acetate. Functionally, catalyzes the deacetylation of 1D-myo-inositol 2-acetamido-2-deoxy-alpha-D-glucopyranoside (GlcNAc-Ins) in the mycothiol biosynthesis pathway. The protein is 1D-myo-inositol 2-acetamido-2-deoxy-alpha-D-glucopyranoside deacetylase of Rhodococcus jostii (strain RHA1).